Reading from the N-terminus, the 456-residue chain is Septin-10 (456 aa).

Residues 40–306 form the Septin-type G domain; sequence QGFCFNILCV…ELYRRCKLQE (267 aa). The G1 motif stretch occupies residues 50–57; that stretch reads GETGIGKS. GTP is bound by residues 50–57, Gly105, 186–194, Gly240, and Arg255; these read GETGIGKS and KADTISKSE. The G3 motif stretch occupies residues 102–105; that stretch reads NTVG. The segment at 185-188 is G4 motif; that stretch reads AKAD. Ser418 is modified (phosphoserine).

It belongs to the TRAFAC class TrmE-Era-EngA-EngB-Septin-like GTPase superfamily. Septin GTPase family. In terms of assembly, septins polymerize into heterooligomeric protein complexes that form filaments, and can associate with cellular membranes, actin filaments and microtubules. GTPase activity is required for filament formation. Interacts with ADGB. Proteolytically cleaved in vitro in a calmodulin-dependent manner.

It is found in the cytoplasm. The protein resides in the cytoskeleton. It localises to the cell projection. Its subcellular location is the cilium. The protein localises to the flagellum. Filament-forming cytoskeletal GTPase. May play a role in cytokinesis (Potential). This is Septin-10 from Rattus norvegicus (Rat).